Here is a 1228-residue protein sequence, read N- to C-terminus: ABC transporter B family member 16 (1228 aa).

Transmembrane regions (helical) follow at residues 22–42, 69–89, 145–167, 171–193, 251–271, and 283–303; these read MGLG…LFFI, LAML…GYCW, LPNI…MLLW, IVGF…ALIG, GIAI…TWYG, and GTVS…GQAL. The 290-residue stretch at 22–311 folds into the ABC transmembrane type-1 1 domain; the sequence is MGLGLIGAVG…ALSNLKYFSE (290 aa). Positions 346 to 582 constitute an ABC transporter 1 domain; the sequence is VEFNNVKCKY…DGKYTSLVRL (237 aa). Position 381-388 (381-388) interacts with ATP; the sequence is GGSGSGKS. Asparagine 529, asparagine 593, and asparagine 628 each carry an N-linked (GlcNAc...) asparagine glycan. The ABC transmembrane type-1 2 domain maps to 658-946; that stretch reads ALCGCLSASL…AGTMTTDLAK (289 aa). 2 helical membrane-spanning segments follow: residues 667 to 687 and 700 to 720; these read LGGA…SVFF and IYVL…ISQQ. The N-linked (GlcNAc...) asparagine glycan is linked to asparagine 755. Transmembrane regions (helical) follow at residues 781–801 and 805–825; these read LLVQ…VIAW and IVMI…RVLL. Asparagine 827 is a glycosylation site (N-linked (GlcNAc...) asparagine). The next 2 membrane-spanning stretches (helical) occupy residues 881–901 and 920–940; these read SWLA…TSAL and FFEL…AGTM. An ABC transporter 2 domain is found at 981-1219; sequence ITFLNVDFAY…GPTGSYFSLV (239 aa). The N-linked (GlcNAc...) asparagine glycan is linked to asparagine 1001. Residue 1016–1023 participates in ATP binding; it reads GPSRSGKS.

Belongs to the ABC transporter superfamily. ABCB family. Multidrug resistance exporter (TC 3.A.1.201) subfamily.

The protein localises to the membrane. The polypeptide is ABC transporter B family member 16 (ABCB16) (Arabidopsis thaliana (Mouse-ear cress)).